The following is a 142-amino-acid chain: Large ribosomal subunit protein cL37 alpha (142 aa).

Residues 1–62 (MALLSPLLSL…AQKRGTVVAM (62 aa)) constitute a chloroplast transit peptide. Residues 123–142 (RKLRKRGAWPPSKMKKLKNV) are disordered.

It belongs to the chloroplast-specific ribosomal protein cL37 family. In terms of assembly, component of the chloroplast large ribosomal subunit (LSU). Mature 70S chloroplast ribosomes of higher plants consist of a small (30S) and a large (50S) subunit. The 30S small subunit contains 1 molecule of ribosomal RNA (16S rRNA) and 24 different proteins. The 50S large subunit contains 3 rRNA molecules (23S, 5S and 4.5S rRNA) and 33 different proteins.

Its subcellular location is the plastid. It is found in the chloroplast. Its function is as follows. Component of the chloroplast ribosome (chloro-ribosome), a dedicated translation machinery responsible for the synthesis of chloroplast genome-encoded proteins, including proteins of the transcription and translation machinery and components of the photosynthetic apparatus. This chain is Large ribosomal subunit protein cL37 alpha (PSRP5), found in Spinacia oleracea (Spinach).